We begin with the raw amino-acid sequence, 86 residues long: Small nuclear ribonucleoprotein F (86 aa).

Ser-2 bears the N-acetylserine mark. The Sm domain maps to 6-78 (NPKPFLNGLT…VLYIRGVEEE (73 aa)).

Belongs to the snRNP Sm proteins family. SmF/LSm6 subfamily. As to quaternary structure, core component of the spliceosomal U1, U2, U4 and U5 small nuclear ribonucleoproteins (snRNPs), the building blocks of the spliceosome. Most spliceosomal snRNPs contain a common set of Sm proteins, SNRPB, SNRPD1, SNRPD2, SNRPD3, SNRPE, SNRPF and SNRPG that assemble in a heptameric protein ring on the Sm site of the small nuclear RNA to form the core snRNP. Component of the U1 snRNP. The U1 snRNP is composed of the U1 snRNA and the 7 core Sm proteins SNRPB, SNRPD1, SNRPD2, SNRPD3, SNRPE, SNRPF and SNRPG, and at least three U1 snRNP-specific proteins SNRNP70/U1-70K, SNRPA/U1-A and SNRPC/U1-C. Component of the U4/U6-U5 tri-snRNP complex composed of the U4, U6 and U5 snRNAs and at least PRPF3, PRPF4, PRPF6, PRPF8, PRPF31, SNRNP200, TXNL4A, SNRNP40, SNRPB, SNRPD1, SNRPD2, SNRPD3, SNRPE, SNRPF, SNRPG, DDX23, CD2BP2, PPIH, SNU13, EFTUD2, SART1 and USP39, plus LSM2, LSM3, LSM4, LSM5, LSM6, LSM7 and LSM8. Component of the U7 snRNP complex, or U7 Sm protein core complex, that is composed of the U7 snRNA and at least LSM10, LSM11, SNRPB, SNRPD3, SNRPE, SNRPF and SNRPG; the complex does not contain SNRPD1 and SNRPD2. Component of the minor spliceosome, which splices U12-type introns. Part of the SMN-Sm complex that contains SMN1, GEMIN2/SIP1, DDX20/GEMIN3, GEMIN4, GEMIN5, GEMIN6, GEMIN7, GEMIN8, STRAP/UNRIP and the Sm proteins SNRPB, SNRPD1, SNRPD2, SNRPD3, SNRPE, SNRPF and SNRPG; catalyzes core snRNPs assembly. Forms a 6S pICln-Sm complex composed of CLNS1A/pICln, SNRPD1, SNRPD2, SNRPE, SNRPF and SNRPG; ring-like structure where CLNS1A/pICln mimics additional Sm proteins and which is unable to assemble into the core snRNP. Interacts with GEMIN2 (via N-terminus); the interaction is direct. Interacts with SNRPD2; the interaction is direct. Interacts with SNRPE; the interaction is direct.

The protein localises to the cytoplasm. It localises to the cytosol. It is found in the nucleus. Its function is as follows. Plays a role in pre-mRNA splicing as a core component of the spliceosomal U1, U2, U4 and U5 small nuclear ribonucleoproteins (snRNPs), the building blocks of the spliceosome. Component of both the pre-catalytic spliceosome B complex and activated spliceosome C complexes. As a component of the minor spliceosome, involved in the splicing of U12-type introns in pre-mRNAs. As part of the U7 snRNP it is involved in histone 3'-end processing. In Homo sapiens (Human), this protein is Small nuclear ribonucleoprotein F (SNRPF).